We begin with the raw amino-acid sequence, 233 residues long: Large ribosomal subunit protein uL2 (233 aa).

Positions 195-233 (PHGGGNHQHVGRPSTVGRNAPPGRKVGRLSPKRRRVNGR) are disordered. A compositionally biased stretch (basic residues) spans 219 to 233 (KVGRLSPKRRRVNGR).

This sequence belongs to the universal ribosomal protein uL2 family. In terms of assembly, part of the 50S ribosomal subunit. Forms a bridge to the 30S subunit in the 70S ribosome.

Functionally, one of the primary rRNA binding proteins. Required for association of the 30S and 50S subunits to form the 70S ribosome, for tRNA binding and peptide bond formation. It has been suggested to have peptidyltransferase activity; this is somewhat controversial. Makes several contacts with the 16S rRNA in the 70S ribosome. The protein is Large ribosomal subunit protein uL2 of Thermoplasma acidophilum (strain ATCC 25905 / DSM 1728 / JCM 9062 / NBRC 15155 / AMRC-C165).